A 447-amino-acid chain; its full sequence is Rab GDP dissociation inhibitor alpha (447 aa).

It belongs to the Rab GDI family. As to quaternary structure, interacts with RHOH. Interacts with the non-phosphorylated forms of RAB1A, RAB3A, RAB5A, RAB5B, RAB5C, RAB8A, RAB8B, RAB10, RAB12, RAB35, and RAB43.

The protein resides in the cytoplasm. Its subcellular location is the golgi apparatus. It is found in the trans-Golgi network. Functionally, regulates the GDP/GTP exchange reaction of most Rab proteins by inhibiting the dissociation of GDP from them, and the subsequent binding of GTP to them. Promotes the dissociation of GDP-bound Rab proteins from the membrane and inhibits their activation. Promotes the dissociation of RAB1A, RAB3A, RAB5A and RAB10 from membranes. The chain is Rab GDP dissociation inhibitor alpha (GDI1) from Macaca fascicularis (Crab-eating macaque).